The following is a 140-amino-acid chain: Chromatin accessibility complex 16kD protein (140 aa).

The tract at residues 111-140 (LNRSAGSDDDDDDDDDDDEEESESESESDE) is disordered. The segment covering 117-140 (SDDDDDDDDDDDEEESESESESDE) has biased composition (acidic residues).

As to quaternary structure, component of the chromatin accessibility complex (CHRAC), composed of Chrac-14, Chrac-16, Acf and Iswi. Forms a heterodimer with Chrac-14. The Chrac-14/Chrac-16 heterodimer interacts with Acf (via N-terminus). Stabilizes the interaction between Chrac-14 and Iswi.

The protein resides in the nucleus. In terms of biological role, histone-like protein which promotes nucleosome sliding of ATP-dependent nucleosome remodeling complexes. Part of the chromatin-accessibility complex (CHRAC) which uses energy/ATP to increase the general accessibility of DNA in chromatin. As a heterodimer with Chrac-14, binds DNA and facilitates nucleosome sliding by Acf. As part of the CHRAC complex, required for oogenesis. This chain is Chromatin accessibility complex 16kD protein, found in Drosophila melanogaster (Fruit fly).